A 548-amino-acid polypeptide reads, in one-letter code: Membrane protein insertase YidC (548 aa).

Residues Asn6 to Asp26 form a helical membrane-spanning segment. The disordered stretch occupies residues Asn28–Ala54. Low complexity predominate over residues Pro29–Thr42. A run of 4 helical transmembrane segments spans residues Phe350 to Tyr370, Phe424 to Ile444, Leu458 to Ile478, and Pro499 to Val519.

This sequence belongs to the OXA1/ALB3/YidC family. Type 1 subfamily. As to quaternary structure, interacts with the Sec translocase complex via SecD. Specifically interacts with transmembrane segments of nascent integral membrane proteins during membrane integration.

It is found in the cell inner membrane. Its function is as follows. Required for the insertion and/or proper folding and/or complex formation of integral membrane proteins into the membrane. Involved in integration of membrane proteins that insert both dependently and independently of the Sec translocase complex, as well as at least some lipoproteins. Aids folding of multispanning membrane proteins. This chain is Membrane protein insertase YidC, found in Citrobacter koseri (strain ATCC BAA-895 / CDC 4225-83 / SGSC4696).